The chain runs to 207 residues: Protein Nef (207 aa).

A lipid anchor (N-myristoyl glycine; by host) is attached at Gly2. Ser6 carries the phosphoserine; by host modification. An acidic; interacts with host PACS1 and PACS2; stabilizes the interaction of NEF/MHC-I with host AP1M1; necessary for MHC-I internalization region spans residues 63-66 (EEZE). The SH3-binding; interaction with Src family tyrosine kinases stretch occupies residues 70–79 (PVRPQVPLRP). A PxxP; stabilizes the interaction of NEF/MHC-I with host AP1M1; necessary for MHC-I internalization motif is present at residues 73–76 (PQVP). Residues 109-125 (EILDLWVYHTQGFFPDW) are mediates dimerization, Nef-PTE1 interaction. Positions 149-181 (LSEEAVEEANEGDNNALLHPICQHGVDDDHKQV) are binding to ATP6V1H. The Dileucine internalization motif; necessary for CD4 internalization motif lies at 165–166 (LL). Residues 175-176 (DD) carry the Diacidic; necessary for CD4 internalization motif.

The protein belongs to the lentivirus primate group Nef protein family. As to quaternary structure, monomer; cytosolic form. Homodimer; membrane bound form. Interacts with Nef associated p21-activated kinase (PAK2); this interaction activates PAK2. Associates with the Nef-MHC-I-AP1 complex; this complex is required for MHC-I internalization. Interacts (via C-terminus) with host PI3-kinase. Interacts with host PACS1; this interaction seems to be weak. Interacts with host PACS2. Interacts with host LCK and MAPK3; these interactions inhibit the kinase activity of the latter. Interacts with host ATP6V1H; this interaction may play a role in CD4 endocytosis. Associates with the CD4-Nef-AP2 complex; this complex is required for CD4 internalization. Interacts with host AP2 subunit alpha and AP2 subunit sigma2. Interacts with TCR-zeta chain; this interaction up-regulates the Fas ligand (FasL) surface expression. Interacts with host HCK, LYN, and SRC; these interactions activate the Src family kinases. Interacts with MAP3K5; this interaction inhibits the Fas and TNFR-mediated death signals. Interacts with beta-COP and PTE1. Interacts with human RACK1; this increases Nef phosphorylation by PKC. Interacts with TP53; this interaction decreases the half-life of TP53, protecting the infected cell against p53-mediated apoptosis. The virion-associated Nef proteins are cleaved by the viral protease to release the soluble C-terminal core protein. Nef is probably cleaved concomitantly with viral structural proteins on maturation of virus particles. In terms of processing, myristoylated. Post-translationally, phosphorylated on serine residues, probably by host PKCdelta and theta.

The protein resides in the host cell membrane. It localises to the virion. The protein localises to the secreted. Its subcellular location is the host Golgi apparatus membrane. Factor of infectivity and pathogenicity, required for optimal virus replication. Alters numerous pathways of T-lymphocyte function and down-regulates immunity surface molecules in order to evade host defense and increase viral infectivity. Alters the functionality of other immunity cells, like dendritic cells, monocytes/macrophages and NK cells. Functionally, in infected CD4(+) T-lymphocytes, down-regulates the surface MHC-I, mature MHC-II, CD4, CD28, CCR5 and CXCR4 molecules. Mediates internalization and degradation of host CD4 through the interaction of with the cytoplasmic tail of CD4, the recruitment of AP-2 (clathrin adapter protein complex 2), internalization through clathrin coated pits, and subsequent transport to endosomes and lysosomes for degradation. Diverts host MHC-I molecules to the trans-Golgi network-associated endosomal compartments by an endocytic pathway to finally target them for degradation. MHC-I down-regulation may involve AP-1 (clathrin adapter protein complex 1) or possibly Src family kinase-ZAP70/Syk-PI3K cascade recruited by PACS2. In consequence infected cells are masked for immune recognition by cytotoxic T-lymphocytes. Decreasing the number of immune receptors also prevents reinfection by more HIV particles (superinfection). Down-regulates host SERINC3 and SERINC5 thereby excluding these proteins from the viral particles. Virion infectivity is drastically higher when SERINC3 or SERINC5 are excluded from the viral envelope, because these host antiviral proteins impair the membrane fusion event necessary for subsequent virion penetration. Its function is as follows. Bypasses host T-cell signaling by inducing a transcriptional program nearly identical to that of anti-CD3 cell activation. Interaction with TCR-zeta chain up-regulates the Fas ligand (FasL). Increasing surface FasL molecules and decreasing surface MHC-I molecules on infected CD4(+) cells send attacking cytotoxic CD8+ T-lymphocytes into apoptosis. In terms of biological role, plays a role in optimizing the host cell environment for viral replication without causing cell death by apoptosis. Protects the infected cells from apoptosis in order to keep them alive until the next virus generation is ready to strike. Inhibits the Fas and TNFR-mediated death signals by blocking MAP3K5/ASK1. Decreases the half-life of TP53, protecting the infected cell against p53-mediated apoptosis. Inhibits the apoptotic signals regulated by the Bcl-2 family proteins through the formation of a Nef/PI3-kinase/PAK2 complex that leads to activation of PAK2 and induces phosphorylation of host BAD. Extracellular Nef protein targets CD4(+) T-lymphocytes for apoptosis by interacting with CXCR4 surface receptors. This is Protein Nef from Homo sapiens (Human).